The following is a 111-amino-acid chain: Large ribosomal subunit protein uL24 (111 aa).

Positions 48–65 are enriched in basic and acidic residues; sequence EKPSRSNREGGRTEREAP. Residues 48–111 are disordered; it reads EKPSRSNREG…AKTTGEELDD (64 aa). Positions 69–80 are enriched in polar residues; that stretch reads SNVNPIDSNGES. Basic and acidic residues predominate over residues 86–95; that stretch reads KKVEDPDTGR.

The protein belongs to the universal ribosomal protein uL24 family. Part of the 50S ribosomal subunit.

In terms of biological role, one of two assembly initiator proteins, it binds directly to the 5'-end of the 23S rRNA, where it nucleates assembly of the 50S subunit. Its function is as follows. One of the proteins that surrounds the polypeptide exit tunnel on the outside of the subunit. The protein is Large ribosomal subunit protein uL24 of Salinibacter ruber (strain DSM 13855 / M31).